The primary structure comprises 1408 residues: DNA-directed RNA polymerase subunit beta' (1408 aa).

Cysteine 70, cysteine 72, cysteine 85, and cysteine 88 together coordinate Zn(2+). Mg(2+)-binding residues include aspartate 460, aspartate 462, and aspartate 464. Zn(2+)-binding residues include cysteine 822, cysteine 896, cysteine 903, and cysteine 906. The disordered stretch occupies residues 1386–1408; the sequence is DTGEAPPLSEEETGEIRNSGYAV.

It belongs to the RNA polymerase beta' chain family. The RNAP catalytic core consists of 2 alpha, 1 beta, 1 beta' and 1 omega subunit. When a sigma factor is associated with the core the holoenzyme is formed, which can initiate transcription. The cofactor is Mg(2+). It depends on Zn(2+) as a cofactor.

It carries out the reaction RNA(n) + a ribonucleoside 5'-triphosphate = RNA(n+1) + diphosphate. DNA-dependent RNA polymerase catalyzes the transcription of DNA into RNA using the four ribonucleoside triphosphates as substrates. This Nitrosospira multiformis (strain ATCC 25196 / NCIMB 11849 / C 71) protein is DNA-directed RNA polymerase subunit beta'.